Reading from the N-terminus, the 298-residue chain is Inosose dehydratase (298 aa).

The protein belongs to the IolE/MocC family. It depends on glutathione as a cofactor. Requires Co(2+) as cofactor. Mn(2+) serves as cofactor.

It carries out the reaction scyllo-inosose = 3D-3,5/4-trihydroxycyclohexane-1,2-dione + H2O. It participates in polyol metabolism; myo-inositol degradation into acetyl-CoA; acetyl-CoA from myo-inositol: step 2/7. Its function is as follows. Catalyzes the dehydration of inosose (2-keto-myo-inositol, 2KMI or 2,4,6/3,5-pentahydroxycyclohexanone) to 3D-(3,5/4)-trihydroxycyclohexane-1,2-dione (D-2,3-diketo-4-deoxy-epi-inositol). This chain is Inosose dehydratase, found in Geobacillus thermodenitrificans (strain NG80-2).